We begin with the raw amino-acid sequence, 118 residues long: Succinate dehydrogenase assembly factor 4, mitochondrial (118 aa).

Residues 1–30 constitute a mitochondrion transit peptide; that stretch reads MQSVTRQTARVLPQMGKQVSYLSTSGAWRA. Positions 65 to 118 are disordered; that stretch reads GKLDEFSRHPYQEKEPLKPWPNQTNPYTGEIGGPAGPEPTRYGDWERKGRVSDF. Basic and acidic residues-rich tracts occupy residues 66–81 and 105–118; these read KLDE…KEPL and RYGD…VSDF.

This sequence belongs to the SDHAF4 family. As to quaternary structure, interacts with SdhA in its FAD-bound form.

It is found in the mitochondrion matrix. Plays an essential role in the assembly of succinate dehydrogenase (SDH), an enzyme complex (also referred to as respiratory complex II) that is a component of both the tricarboxylic acid (TCA) cycle and the mitochondrial electron transport chain, and which couples the oxidation of succinate to fumarate with the reduction of ubiquinone (coenzyme Q) to ubiquinol. Binds to the flavoprotein subunit SdhA in its FAD-bound form, blocking the generation of excess reactive oxygen species (ROS) and facilitating its assembly with the iron-sulfur protein subunit SdhB into the SDH catalytic dimer. This Drosophila melanogaster (Fruit fly) protein is Succinate dehydrogenase assembly factor 4, mitochondrial.